The following is a 103-amino-acid chain: uncharacterized protein (103 aa).

2 disordered regions span residues 1–20 (MIEL…WPKG) and 44–71 (LERM…HHLG). The N-terminal stretch at 1-34 (MIELSYAPDVAGRRSNWPKGSGVNTWTAIRWTFA) is a signal peptide.

This is an uncharacterized protein from Mycobacterium tuberculosis (strain CDC 1551 / Oshkosh).